A 214-amino-acid polypeptide reads, in one-letter code: 3-isopropylmalate dehydratase small subunit (214 aa).

This sequence belongs to the LeuD family. LeuD type 1 subfamily. In terms of assembly, heterodimer of LeuC and LeuD.

It catalyses the reaction (2R,3S)-3-isopropylmalate = (2S)-2-isopropylmalate. Its pathway is amino-acid biosynthesis; L-leucine biosynthesis; L-leucine from 3-methyl-2-oxobutanoate: step 2/4. Catalyzes the isomerization between 2-isopropylmalate and 3-isopropylmalate, via the formation of 2-isopropylmaleate. This is 3-isopropylmalate dehydratase small subunit from Alcanivorax borkumensis (strain ATCC 700651 / DSM 11573 / NCIMB 13689 / SK2).